The sequence spans 285 residues: K88 fimbrial protein AD (285 aa).

The first 21 residues, 1–21 (MKKTLIALAIAASAASGMAHA), serve as a signal peptide directing secretion.

Belongs to the fimbrial K88 protein family. In terms of assembly, K88 fimbria, 0.1-1 micrometer in length and 7 nanometers in diameter, is composed of about 100 identical subunits.

It localises to the fimbrium. Functionally, K88 major fimbrial subunit. Fimbriae (also called pili), are polar filaments radiating from the surface of the bacterium to a length of 0.5-1.5 micrometers and numbering 100-300 per cell. They enable bacteria to colonize the epithelium of specific host organs. This Escherichia coli protein is K88 fimbrial protein AD (faeG).